We begin with the raw amino-acid sequence, 296 residues long: Cyclin-dependent kinase 1 (296 aa).

The region spanning 10–288 (YQKLEKLGEG…AKEALLHPYF (279 aa)) is the Protein kinase domain. Residues 16–24 (LGEGTYGKV) and K39 each bind ATP. A Phosphothreonine modification is found at T20. Residue Y21 is modified to Phosphotyrosine. D129 functions as the Proton acceptor in the catalytic mechanism. T162 carries the post-translational modification Phosphothreonine; by CAK.

It belongs to the protein kinase superfamily. CMGC Ser/Thr protein kinase family. CDC2/CDKX subfamily. As to quaternary structure, forms a stable but non-covalent complex with a regulatory subunit and with a cyclin.

It carries out the reaction L-seryl-[protein] + ATP = O-phospho-L-seryl-[protein] + ADP + H(+). The catalysed reaction is L-threonyl-[protein] + ATP = O-phospho-L-threonyl-[protein] + ADP + H(+). It catalyses the reaction [DNA-directed RNA polymerase] + ATP = phospho-[DNA-directed RNA polymerase] + ADP + H(+). Its activity is regulated as follows. Phosphorylation at Thr-20 or Tyr-21 inactivates the enzyme, while phosphorylation at Thr-162 activates it. In terms of biological role, plays a key role in the control of the eukaryotic cell cycle. Required for entry into S-phase and mitosis. p34 is a component of the kinase complex that phosphorylates the repetitive C-terminus of RNA polymerase II. This Dictyostelium discoideum (Social amoeba) protein is Cyclin-dependent kinase 1 (cdk1).